A 115-amino-acid chain; its full sequence is UPF0145 protein lp_2083 (115 aa).

Belongs to the UPF0145 family.

The sequence is that of UPF0145 protein lp_2083 from Lactiplantibacillus plantarum (strain ATCC BAA-793 / NCIMB 8826 / WCFS1) (Lactobacillus plantarum).